The primary structure comprises 88 residues: Small ribosomal subunit protein uS15 (88 aa).

This sequence belongs to the universal ribosomal protein uS15 family. In terms of assembly, part of the 30S ribosomal subunit. Forms a bridge to the 50S subunit in the 70S ribosome, contacting the 23S rRNA.

Its function is as follows. One of the primary rRNA binding proteins, it binds directly to 16S rRNA where it helps nucleate assembly of the platform of the 30S subunit by binding and bridging several RNA helices of the 16S rRNA. Functionally, forms an intersubunit bridge (bridge B4) with the 23S rRNA of the 50S subunit in the ribosome. The chain is Small ribosomal subunit protein uS15 from Caldanaerobacter subterraneus subsp. tengcongensis (strain DSM 15242 / JCM 11007 / NBRC 100824 / MB4) (Thermoanaerobacter tengcongensis).